Consider the following 149-residue polypeptide: Glycine cleavage system H protein (149 aa).

One can recognise a Lipoyl-binding domain in the interval 23–104 (LIWVGISNHA…PYGIWLFKIN (82 aa)). Lys-64 carries the post-translational modification N6-lipoyllysine.

This sequence belongs to the GcvH family. In terms of assembly, the glycine cleavage system is composed of four proteins: P, T, L and H. The cofactor is (R)-lipoate.

Functionally, the glycine cleavage system catalyzes the degradation of glycine. The H protein shuttles the methylamine group of glycine from the P protein to the T protein. This chain is Glycine cleavage system H protein, found in Polynucleobacter necessarius subsp. necessarius (strain STIR1).